The primary structure comprises 313 residues: Carbamate kinase 2 (313 aa).

Belongs to the carbamate kinase family.

It is found in the cytoplasm. The catalysed reaction is hydrogencarbonate + NH4(+) + ATP = carbamoyl phosphate + ADP + H2O + H(+). Its pathway is metabolic intermediate metabolism; carbamoyl phosphate degradation; CO(2) and NH(3) from carbamoyl phosphate: step 1/1. This Staphylococcus aureus (strain USA300) protein is Carbamate kinase 2 (arcC2).